Here is a 608-residue protein sequence, read N- to C-terminus: MNPVDQPPPPLPTQQPEEQAKEDHDDGDERLFRDPLTTYEYLDDCRDDEEFCHQFLRAYLTPIRNRQEAVRAGLLCRTPEDLAAAGGQKKKTPAPKHPKHAMVYIRRSCLVHSACATAHGKYDIRGLTLESDLAVWAALRGVPLPPDPQHFRWLNAGAFRRLVHEAQYLPEISRAAKRIALAVATGQYVVCTLLDYKTFGTRTHYLRQLCSMTEELYLRLDGTLCLFLEPEERELIGRCLPAALCRGLPVKYRTHRAAVFFHATFMARAEAALKDLYAAFCECGDGRDNGGNHDGNHDGNDHSSLSPSAVASHHSRLEHAELRLERNRHLGAFHLPAIRHLTAGDVARVQDSVSRDLGFADWSQTLIDDYFLLPAGWACANPRRGYAMYLASNAVLALRIIRLLRASIRHEYTACIRMLSGDVQRLIRLFKGEAALLRKGLAQNPVQRRELSRFRKHVHDLKRIRFTEDTFVETFCDFLELVQRIPDYRSVSLRIKRELLCLHVFKLRRGCRAPPTPETARVQRLLWHSLRHGDAPQDRTRLPQFSSALSDAELSNHANRCRRKAPLELGPAVVAAPGPSVRYRAHIQKFERLHVRRFRPHEVGGHAT.

Residues 1-13 (MNPVDQPPPPLPT) show a composition bias toward pro residues. Residues 1-33 (MNPVDQPPPPLPTQQPEEQAKEDHDDGDERLFR) are disordered. The segment covering 18-33 (EQAKEDHDDGDERLFR) has biased composition (basic and acidic residues).

The protein belongs to the herpesviridae U4 family. In terms of assembly, interacts with host KAT5, PSME3 and EP400.

It localises to the host nucleus. It is found in the host nucleolus. Its function is as follows. Promotes a cell cycle arrest in G0/G1 by inducing the proteasomal degradation of host histone acetyltransferase KAT5/Tip60. This chain is Protein UL27 (UL27), found in Human cytomegalovirus (strain AD169) (HHV-5).